The primary structure comprises 208 residues: Thymidylate kinase (208 aa).

An ATP-binding site is contributed by 9–16; it reads GGEGCGKS.

Belongs to the thymidylate kinase family.

It catalyses the reaction dTMP + ATP = dTDP + ADP. Its function is as follows. Phosphorylation of dTMP to form dTDP in both de novo and salvage pathways of dTTP synthesis. In Dehalococcoides mccartyi (strain CBDB1), this protein is Thymidylate kinase.